Consider the following 161-residue polypeptide: SsrA-binding protein (161 aa).

The disordered stretch occupies residues 140 to 161 (KRESIKERDWKRDKQRLLKDRG).

It belongs to the SmpB family.

It localises to the cytoplasm. Its function is as follows. Required for rescue of stalled ribosomes mediated by trans-translation. Binds to transfer-messenger RNA (tmRNA), required for stable association of tmRNA with ribosomes. tmRNA and SmpB together mimic tRNA shape, replacing the anticodon stem-loop with SmpB. tmRNA is encoded by the ssrA gene; the 2 termini fold to resemble tRNA(Ala) and it encodes a 'tag peptide', a short internal open reading frame. During trans-translation Ala-aminoacylated tmRNA acts like a tRNA, entering the A-site of stalled ribosomes, displacing the stalled mRNA. The ribosome then switches to translate the ORF on the tmRNA; the nascent peptide is terminated with the 'tag peptide' encoded by the tmRNA and targeted for degradation. The ribosome is freed to recommence translation, which seems to be the essential function of trans-translation. The polypeptide is SsrA-binding protein (Sphingopyxis alaskensis (strain DSM 13593 / LMG 18877 / RB2256) (Sphingomonas alaskensis)).